A 540-amino-acid chain; its full sequence is L-aspartate oxidase (540 aa).

Residues S16–A19, K38, S45–G52, N161–A162, and D223 contribute to the FAD site. Succinate contacts are provided by residues H244 and T259–E260. The Proton donor/acceptor role is filled by R290. E375 lines the FAD pocket. Residue S389 participates in succinate binding. Residue S391–L392 participates in FAD binding.

It belongs to the FAD-dependent oxidoreductase 2 family. NadB subfamily. In terms of assembly, monomer. Homodimer. Both the monomeric and dimeric forms of the enzyme are catalytically active. Requires FAD as cofactor.

Its subcellular location is the cytoplasm. The catalysed reaction is L-aspartate + O2 = iminosuccinate + H2O2. The enzyme catalyses fumarate + L-aspartate = iminosuccinate + succinate. Its pathway is cofactor biosynthesis; NAD(+) biosynthesis; iminoaspartate from L-aspartate (oxidase route): step 1/1. Its activity is regulated as follows. Inhibited by the product iminoaspartate. Competitively inhibited by mesotartrate. NAD acts as a competitive inhibitor to FAD. Inhibited by iodoacetic acid, diethylpyrocarbonate and tetranitromethane. In terms of biological role, catalyzes the oxidation of L-aspartate to iminoaspartate, the first step in the de novo biosynthesis of NAD(+). Can use either oxygen or fumarate as electron acceptors, which allows the enzyme to be functional under aerobic and anaerobic conditions. In vivo, fumarate is used under anaerobic conditions, and oxygen is the predominant electron acceptor under aerobic conditions due to the lower fumarate levels. In vitro, fumarate is a more efficient electron acceptor and is kinetically superior to oxygen. The sequence is that of L-aspartate oxidase from Escherichia coli (strain K12).